The sequence spans 191 residues: Peptide methionine sulfoxide reductase (191 aa).

Disordered stretches follow at residues 1 to 20 (MASSTTNNPALDLDSDTPEN) and 168 to 191 (EKGGGNGNKQSAQKGCNDPIKCYG).

This sequence belongs to the MsrA Met sulfoxide reductase family.

It carries out the reaction L-methionyl-[protein] + [thioredoxin]-disulfide + H2O = L-methionyl-(S)-S-oxide-[protein] + [thioredoxin]-dithiol. The catalysed reaction is [thioredoxin]-disulfide + L-methionine + H2O = L-methionine (S)-S-oxide + [thioredoxin]-dithiol. In terms of biological role, has an important function as a repair enzyme for proteins that have been inactivated by oxidation. Catalyzes the reversible oxidation-reduction of methionine sulfoxide in proteins to methionine. This chain is Peptide methionine sulfoxide reductase, found in Fragaria ananassa (Strawberry).